Here is a 72-residue protein sequence, read N- to C-terminus: Translation initiation factor IF-1 (72 aa).

Residues 1-72 enclose the S1-like domain; the sequence is MAKEGNIEME…SKGRIVYRAR (72 aa).

The protein belongs to the IF-1 family. In terms of assembly, component of the 30S ribosomal translation pre-initiation complex which assembles on the 30S ribosome in the order IF-2 and IF-3, IF-1 and N-formylmethionyl-tRNA(fMet); mRNA recruitment can occur at any time during PIC assembly.

It localises to the cytoplasm. In terms of biological role, one of the essential components for the initiation of protein synthesis. Stabilizes the binding of IF-2 and IF-3 on the 30S subunit to which N-formylmethionyl-tRNA(fMet) subsequently binds. Helps modulate mRNA selection, yielding the 30S pre-initiation complex (PIC). Upon addition of the 50S ribosomal subunit IF-1, IF-2 and IF-3 are released leaving the mature 70S translation initiation complex. The protein is Translation initiation factor IF-1 of Hahella chejuensis (strain KCTC 2396).